Consider the following 205-residue polypeptide: Enhancer of split mgamma protein (205 aa).

Residues 15–72 form the bHLH domain; sequence YRKVMKPMLERKRRARINKCLDELKDLMVATLESEGEHVTRLEKADILELTVTHLQKM. The Orange domain maps to 93–126; that stretch reads FRSGYIHAVNEVSRSLSQLPGMNVSLGTQLMTHL. The WRPW motif motif lies at 202 to 205; it reads WRPW.

As to quaternary structure, homodimer. Heterodimer with dpn. Might form higher-order oligomers. Transcription repression requires formation of a complex with a corepressor protein (Groucho). As to expression, expressed in sensory organ precursors in the wing, leg and eye imaginal disk.

Its subcellular location is the nucleus. Transcriptional repressor of genes that require a bHLH protein for their transcription. May serve as a transcriptional regulator of the Achaete-scute complex (AS-C) genes. Contributes to the neural-epidermal lineage decision during early neurogenesis. Part of the Notch signaling pathway, plays a role in neuroblasts proliferation in embryos and larvae. In the larval brain, together with other self-renewal transcriptional repressors such as klu and dpn, required for type II neuroblast self-renewal and for maintaining erm in an inactive state in intermediate neural progenitors (INP) derived from type II neuroblasts. The polypeptide is Enhancer of split mgamma protein (Drosophila melanogaster (Fruit fly)).